The chain runs to 616 residues: Chaperone protein HscA (616 aa).

It belongs to the heat shock protein 70 family.

Functionally, chaperone involved in the maturation of iron-sulfur cluster-containing proteins. Has a low intrinsic ATPase activity which is markedly stimulated by HscB. Involved in the maturation of IscU. The chain is Chaperone protein HscA from Enterobacter sp. (strain 638).